Reading from the N-terminus, the 189-residue chain is Peptidyl-tRNA hydrolase (189 aa).

Residue Tyr14 coordinates tRNA. His19 functions as the Proton acceptor in the catalytic mechanism. Residues Tyr64, Asn66, and Asn112 each contribute to the tRNA site.

The protein belongs to the PTH family. Monomer.

It is found in the cytoplasm. It catalyses the reaction an N-acyl-L-alpha-aminoacyl-tRNA + H2O = an N-acyl-L-amino acid + a tRNA + H(+). In terms of biological role, hydrolyzes ribosome-free peptidyl-tRNAs (with 1 or more amino acids incorporated), which drop off the ribosome during protein synthesis, or as a result of ribosome stalling. Functionally, catalyzes the release of premature peptidyl moieties from peptidyl-tRNA molecules trapped in stalled 50S ribosomal subunits, and thus maintains levels of free tRNAs and 50S ribosomes. The protein is Peptidyl-tRNA hydrolase of Clostridium botulinum (strain Langeland / NCTC 10281 / Type F).